A 158-amino-acid chain; its full sequence is ATP synthase subunit b', chloroplastic (158 aa).

Residues 25-45 (ATLPLMALQFIILTTILNFIF) traverse the membrane as a helical segment.

This sequence belongs to the ATPase B chain family. As to quaternary structure, F-type ATPases have 2 components, F(1) - the catalytic core - and F(0) - the membrane proton channel. F(1) has five subunits: alpha(3), beta(3), gamma(1), delta(1), epsilon(1). F(0) has four main subunits: a(1), b(1), b'(1) and c(10-14). The alpha and beta chains form an alternating ring which encloses part of the gamma chain. F(1) is attached to F(0) by a central stalk formed by the gamma and epsilon chains, while a peripheral stalk is formed by the delta, b and b' chains.

Its subcellular location is the plastid. It is found in the chloroplast thylakoid membrane. F(1)F(0) ATP synthase produces ATP from ADP in the presence of a proton or sodium gradient. F-type ATPases consist of two structural domains, F(1) containing the extramembraneous catalytic core and F(0) containing the membrane proton channel, linked together by a central stalk and a peripheral stalk. During catalysis, ATP synthesis in the catalytic domain of F(1) is coupled via a rotary mechanism of the central stalk subunits to proton translocation. In terms of biological role, component of the F(0) channel, it forms part of the peripheral stalk, linking F(1) to F(0). The b'-subunit is a diverged and duplicated form of b found in plants and photosynthetic bacteria. This chain is ATP synthase subunit b', chloroplastic, found in Gracilaria tenuistipitata var. liui (Red alga).